A 248-amino-acid polypeptide reads, in one-letter code: Granulin (248 aa).

The protein belongs to the polyhedrin family.

Component of the virus occlusion bodies, which are large proteinaceous structures, that protect the virus from the outside environment for extended periods until they are ingested by insect larvae. The chain is Granulin from Choristoneura fumiferana (Spruce budworm moth).